The chain runs to 529 residues: Plexin domain-containing protein 2 (529 aa).

The N-terminal stretch at 1-30 (MARFPKADLAAAGVMLLCHFFTDQFQFADG) is a signal peptide. Residues 31–454 (KPGDQILDWQ…AEKKGGTLHA (424 aa)) lie on the Extracellular side of the membrane. Positions 80 to 104 (ASVGQDSPEPRSFTDLLLDDGQDNN) are disordered. Asparagine 103 and asparagine 160 each carry an N-linked (GlcNAc...) asparagine glycan. Positions 327–372 (TCLQFNRCGPCVSSQIGFNCSWCSKLQRCSSGFDRHRQDWVDSGCP) constitute a PSI domain. A helical membrane pass occupies residues 455–475 (GLIIGILILVLIVATAILVTV). Topologically, residues 476–529 (YMYHHPTSAASIFFIERRPSRWPAMKFRRGSGHPAYAEVEPVGEKEGFIVSEQC) are cytoplasmic. Serine 506 carries the post-translational modification Phosphoserine.

This sequence belongs to the plexin family. As to quaternary structure, interacts with CTTN. As to expression, expressed in the endothelial cells of the stroma but not in the endothelial cells of normal colonic tissue.

It localises to the membrane. May play a role in tumor angiogenesis. The polypeptide is Plexin domain-containing protein 2 (PLXDC2) (Homo sapiens (Human)).